The chain runs to 167 residues: Ubiquitin-fold modifier-conjugating enzyme 1 (167 aa).

The active-site Glycyl thioester intermediate is the cysteine 116.

The protein belongs to the ubiquitin-conjugating enzyme family. UFC1 subfamily.

Its function is as follows. E2-like enzyme which forms an intermediate with UFM1 via a thioester linkage. The chain is Ubiquitin-fold modifier-conjugating enzyme 1 from Anopheles gambiae (African malaria mosquito).